Consider the following 137-residue polypeptide: Large ribosomal subunit protein uL16 (137 aa).

The protein belongs to the universal ribosomal protein uL16 family. As to quaternary structure, part of the 50S ribosomal subunit.

In terms of biological role, binds 23S rRNA and is also seen to make contacts with the A and possibly P site tRNAs. This is Large ribosomal subunit protein uL16 from Wolbachia pipientis subsp. Culex pipiens (strain wPip).